The following is a 776-amino-acid chain: Glutathione biosynthesis bifunctional protein GshAB (776 aa).

Residues 1-354 (MIKLDMTILD…QLADENENNI (354 aa)) are glutamate--cysteine ligase. In terms of domain architecture, ATP-grasp spans 521–775 (KLVLAENNIR…IGDKILDFLF (255 aa)). ATP is bound at residue 548-606 (SLFKDKQIVVKPKSTNYGWGISIFKNKFTTEDYQEALNIAFSYDSSVIIEEFIPGDEFR). Positions 728, 745, and 747 each coordinate Mg(2+). 3 residues coordinate Mn(2+): D728, E745, and N747.

This sequence in the N-terminal section; belongs to the glutamate--cysteine ligase type 1 family. Type 2 subfamily. As to quaternary structure, monomer. Mg(2+) is required as a cofactor. Mn(2+) serves as cofactor.

It catalyses the reaction L-cysteine + L-glutamate + ATP = gamma-L-glutamyl-L-cysteine + ADP + phosphate + H(+). The catalysed reaction is gamma-L-glutamyl-L-cysteine + glycine + ATP = glutathione + ADP + phosphate + H(+). It functions in the pathway sulfur metabolism; glutathione biosynthesis; glutathione from L-cysteine and L-glutamate: step 1/2. Its pathway is sulfur metabolism; glutathione biosynthesis; glutathione from L-cysteine and L-glutamate: step 2/2. Synthesizes glutathione from L-glutamate and L-cysteine via gamma-L-glutamyl-L-cysteine. The chain is Glutathione biosynthesis bifunctional protein GshAB from Listeria welshimeri serovar 6b (strain ATCC 35897 / DSM 20650 / CCUG 15529 / CIP 8149 / NCTC 11857 / SLCC 5334 / V8).